A 360-amino-acid polypeptide reads, in one-letter code: Peptide chain release factor 1 (360 aa).

Glutamine 235 carries the N5-methylglutamine modification.

This sequence belongs to the prokaryotic/mitochondrial release factor family. In terms of processing, methylated by PrmC. Methylation increases the termination efficiency of RF1.

The protein resides in the cytoplasm. In terms of biological role, peptide chain release factor 1 directs the termination of translation in response to the peptide chain termination codons UAG and UAA. The chain is Peptide chain release factor 1 from Burkholderia multivorans (strain ATCC 17616 / 249).